The sequence spans 179 residues: DNA utilization protein HofN (179 aa).

The helical transmembrane segment at 19-39 threads the bilayer; sequence LRFWLLMFVAPLLLAVGITLI.

The protein localises to the cell inner membrane. In terms of biological role, required for the use of extracellular DNA as a nutrient. This Escherichia coli (strain K12) protein is DNA utilization protein HofN (hofN).